The following is a 74-amino-acid chain: Mitochondrial import receptor subunit TOM6 homolog (74 aa).

Positions 1–16 (MASSTVPVSAAGSANE) are enriched in polar residues. The interval 1-22 (MASSTVPVSAAGSANETPEIPD) is disordered. Residue Ala-2 is modified to N-acetylalanine.

This sequence belongs to the Tom6 family. As to quaternary structure, forms part of the preprotein translocase complex of the outer mitochondrial membrane (TOM complex) which consists of at least 7 different proteins (TOMM5, TOMM6, TOMM7, TOMM20, TOMM22, TOMM40 and TOMM70).

It is found in the mitochondrion outer membrane. The chain is Mitochondrial import receptor subunit TOM6 homolog (TOMM6) from Homo sapiens (Human).